Here is a 365-residue protein sequence, read N- to C-terminus: Ribosomal RNA large subunit methyltransferase F (365 aa).

The interval 1–48 is disordered; sequence MSKPAVKSVQSATAKTATRAVNIRQKVKAPKQAKPEGKGSTKPVKDRP. The span at 33-48 shows a compositional bias: basic and acidic residues; that stretch reads AKPEGKGSTKPVKDRP.

It belongs to the methyltransferase superfamily. METTL16/RlmF family.

The protein localises to the cytoplasm. The enzyme catalyses adenosine(1618) in 23S rRNA + S-adenosyl-L-methionine = N(6)-methyladenosine(1618) in 23S rRNA + S-adenosyl-L-homocysteine + H(+). Its function is as follows. Specifically methylates the adenine in position 1618 of 23S rRNA. The sequence is that of Ribosomal RNA large subunit methyltransferase F from Shewanella baltica (strain OS223).